The sequence spans 31 residues: Cytochrome b6-f complex subunit 6 (31 aa).

Residues 4-24 form a helical membrane-spanning segment; the sequence is VIAYLGLLASVLIGTIVIYLG.

Belongs to the PetL family. As to quaternary structure, the 4 large subunits of the cytochrome b6-f complex are cytochrome b6, subunit IV (17 kDa polypeptide, PetD), cytochrome f and the Rieske protein, while the 4 small subunits are PetG, PetL, PetM and PetN. The complex functions as a dimer.

It localises to the plastid. Its subcellular location is the chloroplast thylakoid membrane. In terms of biological role, component of the cytochrome b6-f complex, which mediates electron transfer between photosystem II (PSII) and photosystem I (PSI), cyclic electron flow around PSI, and state transitions. PetL is important for photoautotrophic growth as well as for electron transfer efficiency and stability of the cytochrome b6-f complex. The chain is Cytochrome b6-f complex subunit 6 from Oltmannsiellopsis viridis (Marine flagellate).